The primary structure comprises 250 residues: N-acyl homoserine lactonase (250 aa).

H104, H106, D108, H109, H169, D191, and H235 together coordinate Zn(2+).

The protein belongs to the metallo-beta-lactamase superfamily. As to quaternary structure, monomer. Zn(2+) is required as a cofactor.

It carries out the reaction an N-acyl-L-homoserine lactone + H2O = an N-acyl-L-homoserine + H(+). With respect to regulation, completely inhibited by Cu(2+) and Ag(+). Partially inhibited by Cr(2+), Pb(2+) and Fe(2+). Mg(2+), Ca(2+), Mn(2+), Co(2+), Ni(2+), Zn(2+) and Cd(2+) have no effect on activity. The chelating agents EDTA, 2,2'bipyridine and o-phenanthroline have no effect on enzyme activity. In terms of biological role, hydrolyzes acyl homoserine lactones with varying lengths of acyl chains, with a slight preference for substrates without 3-oxo substitution at the C3 position. Has only residual activity towards non-acyl lactones, and no activity towards non-cyclic esters. The chain is N-acyl homoserine lactonase from Bacillus sp.